The sequence spans 207 residues: Holliday junction branch migration complex subunit RuvA (207 aa).

A domain I region spans residues 1–71; the sequence is MIVSIAGKLV…RLTPRLIGFS (71 aa). Positions 72-149 are domain II; that stretch reads TLPERQFFDL…RFALMVAGGE (78 aa). Positions 150–155 are flexible linker; sequence VADAME. The segment at 156–207 is domain III; the sequence is VESPIVSDTYDALVTLGHSESDARKLIDETLATGKKFKDTESLLTAIYQRSK.

This sequence belongs to the RuvA family. As to quaternary structure, homotetramer. Forms an RuvA(8)-RuvB(12)-Holliday junction (HJ) complex. HJ DNA is sandwiched between 2 RuvA tetramers; dsDNA enters through RuvA and exits via RuvB. An RuvB hexamer assembles on each DNA strand where it exits the tetramer. Each RuvB hexamer is contacted by two RuvA subunits (via domain III) on 2 adjacent RuvB subunits; this complex drives branch migration. In the full resolvosome a probable DNA-RuvA(4)-RuvB(12)-RuvC(2) complex forms which resolves the HJ.

Its subcellular location is the cytoplasm. The RuvA-RuvB-RuvC complex processes Holliday junction (HJ) DNA during genetic recombination and DNA repair, while the RuvA-RuvB complex plays an important role in the rescue of blocked DNA replication forks via replication fork reversal (RFR). RuvA specifically binds to HJ cruciform DNA, conferring on it an open structure. The RuvB hexamer acts as an ATP-dependent pump, pulling dsDNA into and through the RuvAB complex. HJ branch migration allows RuvC to scan DNA until it finds its consensus sequence, where it cleaves and resolves the cruciform DNA. This is Holliday junction branch migration complex subunit RuvA from Rhodopirellula baltica (strain DSM 10527 / NCIMB 13988 / SH1).